Consider the following 272-residue polypeptide: 4-hydroxy-tetrahydrodipicolinate reductase (272 aa).

NAD(+)-binding positions include 10–15 (GAGGRM), Glu-36, 100–102 (GTT), and 124–127 (SGNM). Catalysis depends on His-157, which acts as the Proton donor/acceptor. His-158 provides a ligand contact to (S)-2,3,4,5-tetrahydrodipicolinate. Lys-161 serves as the catalytic Proton donor. A (S)-2,3,4,5-tetrahydrodipicolinate-binding site is contributed by 167–168 (GT).

It belongs to the DapB family.

The protein localises to the cytoplasm. The catalysed reaction is (S)-2,3,4,5-tetrahydrodipicolinate + NAD(+) + H2O = (2S,4S)-4-hydroxy-2,3,4,5-tetrahydrodipicolinate + NADH + H(+). The enzyme catalyses (S)-2,3,4,5-tetrahydrodipicolinate + NADP(+) + H2O = (2S,4S)-4-hydroxy-2,3,4,5-tetrahydrodipicolinate + NADPH + H(+). The protein operates within amino-acid biosynthesis; L-lysine biosynthesis via DAP pathway; (S)-tetrahydrodipicolinate from L-aspartate: step 4/4. Catalyzes the conversion of 4-hydroxy-tetrahydrodipicolinate (HTPA) to tetrahydrodipicolinate. The sequence is that of 4-hydroxy-tetrahydrodipicolinate reductase from Bradyrhizobium sp. (strain ORS 278).